Reading from the N-terminus, the 358-residue chain is 3'(2'),5'-bisphosphate nucleotidase (358 aa).

Residue aspartate 52 is the Proton acceptor of the active site. Glutamate 78, aspartate 140, isoleucine 142, and aspartate 143 together coordinate Mg(2+). The Proton acceptor role is filled by threonine 145. The adenosine 3',5'-bisphosphate site is built by threonine 145, histidine 239, serine 263, lysine 266, arginine 280, and aspartate 292. 5 residues coordinate AMP: histidine 239, serine 263, lysine 266, arginine 280, and aspartate 292. Aspartate 292 serves as a coordination point for Mg(2+).

Belongs to the inositol monophosphatase superfamily. Mg(2+) serves as cofactor. Is constitutively transcribed in both roots and shoots.

The enzyme catalyses 3'-phosphoadenylyl sulfate + H2O = adenosine 5'-phosphosulfate + phosphate. It catalyses the reaction adenosine 3',5'-bisphosphate + H2O = AMP + phosphate. It carries out the reaction adenosine 2',5'-bisphosphate + H2O = AMP + phosphate. With respect to regulation, inhibited by Ca(2+), Li(+), and Na(+) and activated by K(+). Its function is as follows. Phosphatase that converts adenosine 3'-phosphate 5'-phosphosulfate (PAPS) to adenosine 5'-phosphosulfate (APS) and 3'(2')-phosphoadenosine 5'-phosphate (PAP) to AMP. May regulate the flux of sulfur in the sulfur-activation pathway by converting PAPS to APS. Shows no activity on myo-inositol 1-phosphate, beta-glycerol phosphate, NADPH, NADP and 5'-AMP. This Oryza sativa (Rice) protein is 3'(2'),5'-bisphosphate nucleotidase.